An 804-amino-acid polypeptide reads, in one-letter code: Protein-lysine N-methyltransferase SMYD4 (804 aa).

112-114 contributes to the S-adenosyl-L-methionine binding site; sequence RSA. The SET domain occupies 233 to 574; it reads SSVGLCIDPL…KGQEILHCYG (342 aa). Zn(2+)-binding residues include Cys-296, Cys-299, Cys-309, Cys-312, Cys-318, Cys-322, His-331, and Cys-335. The MYND-type zinc-finger motif lies at 296 to 335; it reads CHRCLKHTLATVPCDGCSYAKYCSQECLQQAWELYHRTEC. S-adenosyl-L-methionine contacts are provided by residues Asn-427, 539–540, Tyr-573, and Phe-595; that span reads NH.

It belongs to the class V-like SAM-binding methyltransferase superfamily. As to quaternary structure, interacts (via MYND-type zinc finger) with HDAC1.

The protein localises to the nucleus. The protein resides in the cytoplasm. The catalysed reaction is L-lysyl-[protein] + S-adenosyl-L-methionine = N(6)-methyl-L-lysyl-[protein] + S-adenosyl-L-homocysteine + H(+). Protein-lysine N-methyltransferase. Monomethylates PRMT5, modulating its transcriptional activity. May also act as a histone methyltransferase. Plays a critical role in cardiac development. Acts as a key epigenetic regulator of gene expression during cardiac development via its dual activities as a methyltransferase and negative regulator of HDAC1. The chain is Protein-lysine N-methyltransferase SMYD4 (SMYD4) from Pongo abelii (Sumatran orangutan).